Reading from the N-terminus, the 260-residue chain is Large ribosomal subunit protein uL2y (260 aa).

The interval 227 to 248 is disordered; sequence RRDKSAGAKVGQIAARRTGRRR.

It belongs to the universal ribosomal protein uL2 family.

The polypeptide is Large ribosomal subunit protein uL2y (RPL8B) (Arabidopsis thaliana (Mouse-ear cress)).